The primary structure comprises 164 residues: UBA-like domain-containing protein 2 (164 aa).

At serine 2 the chain carries N-acetylserine. Residues 128 to 164 form a disordered region; sequence SSPTTFHHLHRPQPTWPPGAQQGGAQQKAMAAMDGQR. Residues 146–164 are compositionally biased toward low complexity; that stretch reads GAQQGGAQQKAMAAMDGQR.

It belongs to the UBALD family.

The sequence is that of UBA-like domain-containing protein 2 (UBALD2) from Homo sapiens (Human).